The primary structure comprises 413 residues: Multidrug resistance protein MdtA (413 aa).

The first 20 residues, 1–20 (MKGSNTFRWAIAIGVVVAAA), serve as a signal peptide directing secretion. 2 disordered regions span residues 31-57 (SPTA…RDGP) and 391-413 (EPQT…GARA). A compositionally biased stretch (basic and acidic residues) spans 397–413 (ADEKSPSRHEGQKGARA).

It belongs to the membrane fusion protein (MFP) (TC 8.A.1) family. Part of a tripartite efflux system composed of MdtA, MdtB and MdtC.

The protein localises to the cell inner membrane. In Salmonella typhimurium (strain LT2 / SGSC1412 / ATCC 700720), this protein is Multidrug resistance protein MdtA.